We begin with the raw amino-acid sequence, 511 residues long: GMP synthase [glutamine-hydrolyzing] (511 aa).

The Glutamine amidotransferase type-1 domain maps to 5–195; it reads AILVLDFGSQ…VFKICQAQIN (191 aa). C82 (nucleophile) is an active-site residue. Active-site residues include H169 and E171. The region spanning 196-386 is the GMPS ATP-PPase domain; it reads WSLEGNLETI…LGIKKESLYR (191 aa). 223–229 is a binding site for ATP; sequence SGGTDSL.

As to quaternary structure, homodimer.

The catalysed reaction is XMP + L-glutamine + ATP + H2O = GMP + L-glutamate + AMP + diphosphate + 2 H(+). The protein operates within purine metabolism; GMP biosynthesis; GMP from XMP (L-Gln route): step 1/1. Functionally, catalyzes the synthesis of GMP from XMP. The protein is GMP synthase [glutamine-hydrolyzing] (guaA) of Borreliella burgdorferi (strain N40) (Borrelia burgdorferi).